A 269-amino-acid chain; its full sequence is Formamidopyrimidine-DNA glycosylase (269 aa).

Pro-2 (schiff-base intermediate with DNA) is an active-site residue. Glu-3 serves as the catalytic Proton donor. Lys-57 (proton donor; for beta-elimination activity) is an active-site residue. DNA contacts are provided by His-90, Arg-109, and Lys-150. An FPG-type zinc finger spans residues 235–269 (QVYGRAGELCRRCGNVIEIAKHGQRSTFFCRHCQH). Arg-259 acts as the Proton donor; for delta-elimination activity in catalysis.

The protein belongs to the FPG family. As to quaternary structure, monomer. The cofactor is Zn(2+).

The catalysed reaction is Hydrolysis of DNA containing ring-opened 7-methylguanine residues, releasing 2,6-diamino-4-hydroxy-5-(N-methyl)formamidopyrimidine.. It carries out the reaction 2'-deoxyribonucleotide-(2'-deoxyribose 5'-phosphate)-2'-deoxyribonucleotide-DNA = a 3'-end 2'-deoxyribonucleotide-(2,3-dehydro-2,3-deoxyribose 5'-phosphate)-DNA + a 5'-end 5'-phospho-2'-deoxyribonucleoside-DNA + H(+). In terms of biological role, involved in base excision repair of DNA damaged by oxidation or by mutagenic agents. Acts as a DNA glycosylase that recognizes and removes damaged bases. Has a preference for oxidized purines, such as 7,8-dihydro-8-oxoguanine (8-oxoG). Has AP (apurinic/apyrimidinic) lyase activity and introduces nicks in the DNA strand. Cleaves the DNA backbone by beta-delta elimination to generate a single-strand break at the site of the removed base with both 3'- and 5'-phosphates. The chain is Formamidopyrimidine-DNA glycosylase from Yersinia enterocolitica serotype O:8 / biotype 1B (strain NCTC 13174 / 8081).